The sequence spans 249 residues: Small ribosomal subunit protein uS3 (249 aa).

The region spanning 38-106 (IRDFLSKGLE…QVQLNILEVK (69 aa)) is the KH type-2 domain. Over residues 218–233 (ARDDRGSRRGRNDRPR) the composition is skewed to basic and acidic residues. Positions 218 to 249 (ARDDRGSRRGRNDRPRRGGGRRRRAAEQKQEG) are disordered.

Belongs to the universal ribosomal protein uS3 family. In terms of assembly, part of the 30S ribosomal subunit. Forms a tight complex with proteins S10 and S14.

Binds the lower part of the 30S subunit head. Binds mRNA in the 70S ribosome, positioning it for translation. The sequence is that of Small ribosomal subunit protein uS3 from Corynebacterium kroppenstedtii (strain DSM 44385 / JCM 11950 / CIP 105744 / CCUG 35717).